Consider the following 48-residue polypeptide: ATP synthase protein 8 (48 aa).

Residues 13-32 (LVYGFALVTILLVLFAQYFL) traverse the membrane as a helical segment.

The protein belongs to the ATPase protein 8 family. F-type ATPases have 2 components, CF(1) - the catalytic core - and CF(0) - the membrane proton channel.

Its subcellular location is the mitochondrion membrane. In terms of biological role, mitochondrial membrane ATP synthase (F(1)F(0) ATP synthase or Complex V) produces ATP from ADP in the presence of a proton gradient across the membrane which is generated by electron transport complexes of the respiratory chain. F-type ATPases consist of two structural domains, F(1) - containing the extramembraneous catalytic core and F(0) - containing the membrane proton channel, linked together by a central stalk and a peripheral stalk. During catalysis, ATP synthesis in the catalytic domain of F(1) is coupled via a rotary mechanism of the central stalk subunits to proton translocation. Part of the complex F(0) domain. Minor subunit located with subunit a in the membrane. In Kluyveromyces lactis (strain ATCC 8585 / CBS 2359 / DSM 70799 / NBRC 1267 / NRRL Y-1140 / WM37) (Yeast), this protein is ATP synthase protein 8 (ATP8).